Consider the following 1960-residue polypeptide: Nuclear pore complex protein Nup98-Nup96 (1960 aa).

Tandem repeats lie at residues phenylalanine 2–glycine 3, phenylalanine 9–glycine 10, phenylalanine 18–glycine 19, phenylalanine 30–glycine 31, phenylalanine 35–glycine 36, phenylalanine 43–glycine 44, phenylalanine 59–glycine 60, phenylalanine 73–glycine 74, phenylalanine 81–glycine 82, phenylalanine 92–glycine 93, phenylalanine 105–glycine 106, phenylalanine 117–glycine 118, phenylalanine 125–glycine 126, phenylalanine 135–glycine 136, phenylalanine 148–glycine 149, phenylalanine 160–glycine 161, phenylalanine 163–glycine 164, phenylalanine 174–glycine 175, phenylalanine 264–glycine 265, phenylalanine 266–glycine 267, phenylalanine 282–glycine 283, phenylalanine 293–glycine 294, phenylalanine 304–glycine 305, phenylalanine 309–glycine 310, phenylalanine 319–glycine 320, phenylalanine 333–glycine 334, phenylalanine 352–glycine 353, phenylalanine 358–glycine 359, phenylalanine 365–glycine 366, phenylalanine 377–glycine 378, phenylalanine 384–glycine 385, phenylalanine 387–glycine 388, phenylalanine 400–glycine 401, phenylalanine 413–glycine 414, phenylalanine 426–glycine 427, phenylalanine 428–glycine 429, phenylalanine 441–glycine 442, phenylalanine 454–glycine 455, phenylalanine 467–glycine 468, phenylalanine 493–glycine 494, phenylalanine 496–glycine 497, phenylalanine 516–glycine 517, phenylalanine 527–glycine 528, phenylalanine 546–glycine 547, phenylalanine 553–glycine 554, and phenylalanine 565–glycine 566. Residues phenylalanine 2–glycine 566 are 46 X 2 AA repeats of F-G. Disordered regions lie at residues lysine 698–proline 768 and threonine 781–glutamine 860. Positions asparagine 704–serine 718 are enriched in polar residues. Over residues glutamate 755–proline 768 the composition is skewed to basic and acidic residues. Polar residues-rich tracts occupy residues threonine 781 to asparagine 794 and arginine 806 to serine 850. One can recognise a Peptidase S59 domain in the interval arginine 886–phenylalanine 1028. Serine 1029 acts as the Nucleophile in catalysis.

This sequence belongs to the nucleoporin GLFG family. As to quaternary structure, part of the nuclear pore complex (NPC). Interacts with Rae1. Nuclear pore complex protein Nup98: Interacts with pzg and Chro. Interacts with MBD-R2; the interaction allows Nup98 recruitment to chromatin. Interacts with Trx. Interacts with Wds. Interacts with Mgtor and Cp190. Upon ecdysone stimulation, interacts with EcR, CTCF, su(Hw) and Trl. Post-translationally, isoform A and isoform C are autoproteolytically cleaved to yield Nup98 and Nup96 or Nup98 only, respectively. As to expression, expressed in brain.

It is found in the chromosome. The protein localises to the nucleus. The protein resides in the nucleoplasm. It localises to the nucleus membrane. Its subcellular location is the nuclear pore complex. Its function is as follows. Part of the nuclear pore complex (NPC). Required for MAD import as part of the Nup107-160 complex and required for nuclear export of Moe probably via its association with Rae1. Plays a role in nuclear mRNA export. Promotes cell antiviral response by up-regulating FoxK-dependent antiviral gene transcription. In germline stem cells, involved in their maintenance and division together with the TGF-Beta and EGFR signaling pathways. In larval lymph glands, has a role in the maintenance of hematopoiesis by regulating Pvr expression. Part of the nuclear pore complex (NPC). In the nucleoplasm, binds to transcriptionally active chromatin with a preference for regulatory regions; co-localizes with RNA polymerase II in a RNA-independent manner and before transition into transcription elongation. Plays a role in the transcriptional memory process by stabilizing enhancer-promoter loops and by mediating anchoring of chromatin to the nuclear pore complex region. During larval development, interacts with trx and MBD-R2 and regulates transcription of developmental genes including ecdysone-responsive genes such as Eip74 and E23. In terms of biological role, part of the nuclear pore complex (NPC). This Drosophila melanogaster (Fruit fly) protein is Nuclear pore complex protein Nup98-Nup96.